Consider the following 264-residue polypeptide: Thiazole synthase (264 aa).

Residue K106 is the Schiff-base intermediate with DXP of the active site. Residues G167, 193 to 194 (AG), and 215 to 216 (NT) each bind 1-deoxy-D-xylulose 5-phosphate.

It belongs to the ThiG family. Homotetramer. Forms heterodimers with either ThiH or ThiS.

It localises to the cytoplasm. It carries out the reaction [ThiS sulfur-carrier protein]-C-terminal-Gly-aminoethanethioate + 2-iminoacetate + 1-deoxy-D-xylulose 5-phosphate = [ThiS sulfur-carrier protein]-C-terminal Gly-Gly + 2-[(2R,5Z)-2-carboxy-4-methylthiazol-5(2H)-ylidene]ethyl phosphate + 2 H2O + H(+). Its pathway is cofactor biosynthesis; thiamine diphosphate biosynthesis. In terms of biological role, catalyzes the rearrangement of 1-deoxy-D-xylulose 5-phosphate (DXP) to produce the thiazole phosphate moiety of thiamine. Sulfur is provided by the thiocarboxylate moiety of the carrier protein ThiS. In vitro, sulfur can be provided by H(2)S. The protein is Thiazole synthase of Xanthomonas axonopodis pv. citri (strain 306).